The chain runs to 397 residues: Metallophosphoesterase 1 (397 aa).

The chain crosses the membrane as a helical span at residues isoleucine 27–phenylalanine 47. A divalent metal cation contacts are provided by aspartate 77, aspartate 119, asparagine 157, histidine 250, histidine 304, and histidine 306. A helical transmembrane segment spans residues valine 357–phenylalanine 377. Positions lysine 393–arginine 397 match the Di-lysine motif motif.

Belongs to the metallophosphoesterase superfamily. MPPE1 family. As to quaternary structure, interacts with GPI-anchor proteins (via the GPI portion). Interacts with TMED10. Mn(2+) serves as cofactor.

The protein localises to the endoplasmic reticulum-Golgi intermediate compartment membrane. Metallophosphoesterase that catalyzes the removal of a side-chain ethanolamine-phosphate (EtNP) from the second mannose of the GPI-anchor protein intermediate. Participates in the glycan remodeling steps of GPI-anchor maturation to allow an efficient transport of GPI-anchor proteins from the endoplasmic reticulum to the Golgi. The polypeptide is Metallophosphoesterase 1 (Pongo abelii (Sumatran orangutan)).